A 727-amino-acid polypeptide reads, in one-letter code: Fatty acid oxidation complex subunit alpha (727 aa).

The interval 1 to 200 is enoyl-CoA hydratase; the sequence is MNDQQPFSAI…RQGLVDEAVP (200 aa). The 3-hydroxyacyl-CoA dehydrogenase stretch occupies residues 316–727; sequence KPIHYVGILG…PPTDEDDSAS (412 aa).

This sequence in the N-terminal section; belongs to the enoyl-CoA hydratase/isomerase family. The protein in the central section; belongs to the 3-hydroxyacyl-CoA dehydrogenase family. Heterotetramer of two alpha chains (FadJ) and two beta chains (FadI).

It localises to the cytoplasm. The enzyme catalyses a (3S)-3-hydroxyacyl-CoA = a (2E)-enoyl-CoA + H2O. The catalysed reaction is a 4-saturated-(3S)-3-hydroxyacyl-CoA = a (3E)-enoyl-CoA + H2O. It carries out the reaction a (3S)-3-hydroxyacyl-CoA + NAD(+) = a 3-oxoacyl-CoA + NADH + H(+). It catalyses the reaction (3S)-3-hydroxybutanoyl-CoA = (3R)-3-hydroxybutanoyl-CoA. It functions in the pathway lipid metabolism; fatty acid beta-oxidation. Functionally, catalyzes the formation of a hydroxyacyl-CoA by addition of water on enoyl-CoA. Also exhibits 3-hydroxyacyl-CoA epimerase and 3-hydroxyacyl-CoA dehydrogenase activities. This Pectobacterium carotovorum subsp. carotovorum (strain PC1) protein is Fatty acid oxidation complex subunit alpha.